We begin with the raw amino-acid sequence, 421 residues long: Imidazolonepropionase (421 aa).

His-81 and His-83 together coordinate Fe(3+). Zn(2+) contacts are provided by His-81 and His-83. 4-imidazolone-5-propanoate-binding residues include Arg-90, Tyr-153, and His-186. An N-formimidoyl-L-glutamate-binding site is contributed by Tyr-153. His-251 contacts Fe(3+). A Zn(2+)-binding site is contributed by His-251. Glu-254 provides a ligand contact to 4-imidazolone-5-propanoate. Asp-326 provides a ligand contact to Fe(3+). Asp-326 is a Zn(2+) binding site. Asn-328 and Gly-330 together coordinate N-formimidoyl-L-glutamate. Position 331 (Ser-331) interacts with 4-imidazolone-5-propanoate.

The protein belongs to the metallo-dependent hydrolases superfamily. HutI family. Zn(2+) is required as a cofactor. The cofactor is Fe(3+).

The protein localises to the cytoplasm. It carries out the reaction 4-imidazolone-5-propanoate + H2O = N-formimidoyl-L-glutamate. Its pathway is amino-acid degradation; L-histidine degradation into L-glutamate; N-formimidoyl-L-glutamate from L-histidine: step 3/3. Its function is as follows. Catalyzes the hydrolytic cleavage of the carbon-nitrogen bond in imidazolone-5-propanoate to yield N-formimidoyl-L-glutamate. It is the third step in the universal histidine degradation pathway. The chain is Imidazolonepropionase from Streptococcus pyogenes serotype M4 (strain MGAS10750).